Consider the following 74-residue polypeptide: Veswaprin-a (74 aa).

The N-terminal stretch at 1–24 is a signal peptide; sequence MSSGGLLLLLGLLTLWAEVTPISG. In terms of domain architecture, WAP spans 27-71; it reads RPKKPGLCPPRPQKPCVKECKNDWSCPGQQKCCNYGCIDECRDPI. 4 cysteine pairs are disulfide-bonded: cysteine 34–cysteine 59, cysteine 42–cysteine 63, cysteine 46–cysteine 58, and cysteine 52–cysteine 67.

Belongs to the venom waprin family. Expressed by the venom gland.

Its subcellular location is the secreted. Damages membranes of susceptible bacteria. Has no hemolytic activity. Not toxic to mice. Does not inhibit the proteinases elastase and cathepsin G. The polypeptide is Veswaprin-a (Demansia vestigiata (Lesser black whip snake)).